We begin with the raw amino-acid sequence, 287 residues long: 4-hydroxybenzoate octaprenyltransferase (287 aa).

8 helical membrane-spanning segments follow: residues 19–39, 42–62, 95–115, 136–156, 166–186, 210–230, 233–253, and 264–284; these read IGSL…ADGL, WHVL…GCVI, FFAV…TLTI, YLPQ…AYAA, WLLF…YAMV, IIGL…SQLA, GIYY…QWLI, and AFLN…ASVL.

It belongs to the UbiA prenyltransferase family. It depends on Mg(2+) as a cofactor.

The protein resides in the cell inner membrane. The catalysed reaction is all-trans-octaprenyl diphosphate + 4-hydroxybenzoate = 4-hydroxy-3-(all-trans-octaprenyl)benzoate + diphosphate. It functions in the pathway cofactor biosynthesis; ubiquinone biosynthesis. Catalyzes the prenylation of para-hydroxybenzoate (PHB) with an all-trans polyprenyl group. Mediates the second step in the final reaction sequence of ubiquinone-8 (UQ-8) biosynthesis, which is the condensation of the polyisoprenoid side chain with PHB, generating the first membrane-bound Q intermediate 3-octaprenyl-4-hydroxybenzoate. In Aliivibrio fischeri (strain MJ11) (Vibrio fischeri), this protein is 4-hydroxybenzoate octaprenyltransferase.